The sequence spans 434 residues: MVVKFTKSEALHKEALEHIVGGVNSPSRSFKAVGGGAPIAMERGKGAYFWDVDGNKYIDYLAAYGPIITGHAHPHITKAITTAAENGVLYGTPTALEVKFAKMLKEAMPALDKVRFVNSGTEAVMTTIRVARAYTGRTKIMKFAGCYHGHSDLVLVAAGSGPSTLGTPDSAGVPQSIAQEVITVPFNNVETLKEALDKWGHEVAAILVEPIVGNFGIVEPKPGFLEKVNELVHEAGALVIYDEVITAFRFMYGGAQDLLGVTPDLTALGKVIGGGLPIGAYGGKKEIMEQVAPLGPAYQAGTMAGNPASMASGIACLEVLQQEGLYEKLDELGAMLEKGILEQAAKHNIDITLNRLKGALTVYFTTNTIEDYDAAQNTDGEMFGKFFKLMLQEGVNLAPSKYEAWFLTTEHTKEDIEYTIEAVGRAFAALADNK.

The residue at position 270 (Lys-270) is an N6-(pyridoxal phosphate)lysine.

The protein belongs to the class-III pyridoxal-phosphate-dependent aminotransferase family. HemL subfamily. In terms of assembly, homodimer. It depends on pyridoxal 5'-phosphate as a cofactor.

The protein resides in the cytoplasm. The enzyme catalyses (S)-4-amino-5-oxopentanoate = 5-aminolevulinate. The protein operates within porphyrin-containing compound metabolism; protoporphyrin-IX biosynthesis; 5-aminolevulinate from L-glutamyl-tRNA(Glu): step 2/2. This chain is Glutamate-1-semialdehyde 2,1-aminomutase 1, found in Bacillus anthracis (strain CDC 684 / NRRL 3495).